We begin with the raw amino-acid sequence, 154 residues long: Myoglobin (154 aa).

Positions 2–148 (GLSDGEWQLV…FRKDIAAKYK (147 aa)) constitute a Globin domain. Phosphoserine is present on Ser4. His65 contributes to the nitrite binding site. His65 lines the O2 pocket. Thr68 carries the phosphothreonine modification. Residue His94 participates in heme b binding.

It belongs to the globin family. Monomeric.

It is found in the cytoplasm. It localises to the sarcoplasm. It catalyses the reaction Fe(III)-heme b-[protein] + nitric oxide + H2O = Fe(II)-heme b-[protein] + nitrite + 2 H(+). It carries out the reaction H2O2 + AH2 = A + 2 H2O. Functionally, monomeric heme protein which primary function is to store oxygen and facilitate its diffusion within muscle tissues. Reversibly binds oxygen through a pentacoordinated heme iron and enables its timely and efficient release as needed during periods of heightened demand. Depending on the oxidative conditions of tissues and cells, and in addition to its ability to bind oxygen, it also has a nitrite reductase activity whereby it regulates the production of bioactive nitric oxide. Under stress conditions, like hypoxia and anoxia, it also protects cells against reactive oxygen species thanks to its pseudoperoxidase activity. In Globicephala melas (Long-finned pilot whale), this protein is Myoglobin (MB).